The following is a 215-amino-acid chain: UPF0502 protein YceH (215 aa).

Lys80 is modified (N6-acetyllysine).

The protein belongs to the UPF0502 family.

In Escherichia coli O81 (strain ED1a), this protein is UPF0502 protein YceH.